The primary structure comprises 247 residues: Coproheme decarboxylase (247 aa).

Residues R129, 143 to 147 (YPMDK), H170, Q183, and S221 contribute to the Fe-coproporphyrin III site. The active site involves Y143.

Belongs to the ChdC family. Type 1 subfamily. The cofactor is Fe-coproporphyrin III.

It catalyses the reaction Fe-coproporphyrin III + 2 H2O2 + 2 H(+) = heme b + 2 CO2 + 4 H2O. It carries out the reaction Fe-coproporphyrin III + H2O2 + H(+) = harderoheme III + CO2 + 2 H2O. The catalysed reaction is harderoheme III + H2O2 + H(+) = heme b + CO2 + 2 H2O. Its pathway is porphyrin-containing compound metabolism; protoheme biosynthesis. Involved in coproporphyrin-dependent heme b biosynthesis. Catalyzes the decarboxylation of Fe-coproporphyrin III (coproheme) to heme b (protoheme IX), the last step of the pathway. The reaction occurs in a stepwise manner with a three-propionate intermediate. The chain is Coproheme decarboxylase from Bacillus cereus (strain B4264).